The sequence spans 1168 residues: DNA-directed RNA polymerase subunit beta (1168 aa).

This sequence belongs to the RNA polymerase beta chain family. The RNAP catalytic core consists of 2 alpha, 1 beta, 1 beta' and 1 omega subunit. When a sigma factor is associated with the core the holoenzyme is formed, which can initiate transcription.

It catalyses the reaction RNA(n) + a ribonucleoside 5'-triphosphate = RNA(n+1) + diphosphate. DNA-dependent RNA polymerase catalyzes the transcription of DNA into RNA using the four ribonucleoside triphosphates as substrates. The polypeptide is DNA-directed RNA polymerase subunit beta (Corynebacterium kroppenstedtii (strain DSM 44385 / JCM 11950 / CIP 105744 / CCUG 35717)).